Reading from the N-terminus, the 88-residue chain is Apolipoprotein C-I (88 aa).

The N-terminal stretch at 1-26 (MRLILSLPVLVVVLSMVLEGPAPAQA) is a signal peptide.

It belongs to the apolipoprotein C1 family.

Its subcellular location is the secreted. Functionally, inhibitor of lipoprotein binding to the low density lipoprotein (LDL) receptor, LDL receptor-related protein, and very low density lipoprotein (VLDL) receptor. Associates with high density lipoproteins (HDL) and the triacylglycerol-rich lipoproteins in the plasma and makes up about 10% of the protein of the VLDL and 2% of that of HDL. Appears to interfere directly with fatty acid uptake and is also the major plasma inhibitor of cholesteryl ester transfer protein (CETP). Binds free fatty acids and reduces their intracellular esterification. Modulates the interaction of APOE with beta-migrating VLDL and inhibits binding of beta-VLDL to the LDL receptor-related protein. This is Apolipoprotein C-I (APOC1) from Lycaon pictus (African wild dog).